We begin with the raw amino-acid sequence, 108 residues long: MYAVIRTGGKQYRVAPGDVLKIETAAANQDGQIEFSEVLAFSGETGSVVKPGAAKVLASVEGEGRGDKILVFHYKRKKQYKKLQGHRQNFTQIRIQEIQIDGNSYRAQ.

Belongs to the bacterial ribosomal protein bL21 family. As to quaternary structure, part of the 50S ribosomal subunit. Contacts protein L20.

Functionally, this protein binds to 23S rRNA in the presence of protein L20. The protein is Large ribosomal subunit protein bL21 of Acidobacterium capsulatum (strain ATCC 51196 / DSM 11244 / BCRC 80197 / JCM 7670 / NBRC 15755 / NCIMB 13165 / 161).